A 189-amino-acid polypeptide reads, in one-letter code: MyoD family inhibitor domain-containing protein 2 (189 aa).

One can recognise an MDFI domain in the interval 28–188 (KEDTQLTNAK…LAMEISEICY (161 aa)).

It belongs to the MDFI family.

This chain is MyoD family inhibitor domain-containing protein 2, found in Homo sapiens (Human).